The primary structure comprises 414 residues: MAALFVSLLALTSLVPVQGAATVPQTDYAKRAERVLRSAPLIDGHNDLPYAIRRSTNDQIYDGKLPFETSLKGHTDLPRMRKGRMGGQFWSVFIACPSDPNAPINTPKFATRDTLEQIDVARRLVDKYSKDLMYCDNPGCAKRAFREGKIGSFIGIEGGHQVGSSIAALRQAFYAGARYMTLTHNCDNAWATAASTVRAGKPDLGMTDFGPALIKEMNRLGMLVDLSHVSHQTMRDVLKITKAPVIFSHSSAYEVSKHLRNVPDDVLKTVAKNNGVVMVTFVSSFVKVDDPDSADVNTVVKHIFHIAEVAGWDHVGLGGDYDGTTELPKGLEDVSKYPYLIEKVLEAGATEEQARKLVGENVLRVWTEVEQIAKKIQRSGVLPVEEVWKGRNGTALSERSTFIEGPAPLEYGCD.

Positions 1-20 are cleaved as a signal peptide; sequence MAALFVSLLALTSLVPVQGA. Zn(2+)-binding residues include H45, D47, and E157. C96 and C186 are disulfide-bonded. Residue H184 participates in substrate binding. Zn(2+) is bound by residues H228 and H249. Substrate is bound by residues R260 and D320. A glycan (N-linked (GlcNAc...) asparagine) is linked at N392.

It belongs to the metallo-dependent hydrolases superfamily. Peptidase M19 family. Zn(2+) is required as a cofactor.

The catalysed reaction is an L-aminoacyl-L-amino acid + H2O = 2 an L-alpha-amino acid. In terms of biological role, hydrolyzes a wide range of dipeptides. This chain is Putative dipeptidase ARB_02715, found in Arthroderma benhamiae (strain ATCC MYA-4681 / CBS 112371) (Trichophyton mentagrophytes).